The primary structure comprises 350 residues: Biotin synthase (350 aa).

Positions 41–268 constitute a Radical SAM core domain; sequence NEVQISRLLS…KSRVRLSAGR (228 aa). [4Fe-4S] cluster is bound by residues Cys56, Cys60, and Cys63. The [2Fe-2S] cluster site is built by Cys100, Cys131, Cys191, and Arg263.

It belongs to the radical SAM superfamily. Biotin synthase family. Homodimer. The cofactor is [4Fe-4S] cluster. It depends on [2Fe-2S] cluster as a cofactor.

It catalyses the reaction (4R,5S)-dethiobiotin + (sulfur carrier)-SH + 2 reduced [2Fe-2S]-[ferredoxin] + 2 S-adenosyl-L-methionine = (sulfur carrier)-H + biotin + 2 5'-deoxyadenosine + 2 L-methionine + 2 oxidized [2Fe-2S]-[ferredoxin]. It functions in the pathway cofactor biosynthesis; biotin biosynthesis; biotin from 7,8-diaminononanoate: step 2/2. Catalyzes the conversion of dethiobiotin (DTB) to biotin by the insertion of a sulfur atom into dethiobiotin via a radical-based mechanism. The polypeptide is Biotin synthase (Shewanella sp. (strain ANA-3)).